The following is a 437-amino-acid chain: MRQWTAIHLAKLARKASRAVGKRGTDLPGQIARKVDTDVLRKLAEQVDDIVFISGTNGKTTTSNLIGHTLKANNIQIIHNNEGANMAAGITSAFIMQSTPKTKIAVIEIDEGSIPRVLKEVTPSMMVFTNFFRDQMDRFGEIDIMVNNIAETISNKGIKLLLNADDPFVSRLKIASDTIVYYGMKAHAHEFEQSTMNESRYCPNCGRLLQYDYIHYNQIGHYHCQCGFKREQAKYEISSFDVAPFLYLNINDEKYDMKIAGDFNAYNALAAYTVLRELGLNEQTIKNGFETYTSDNGRMQYFKKERKEAMINLAKNPAGMNASLSVGEQLEGEKVYVISLNDNAADGRDTSWIYDADFEKLSKQQIEAIIVTGTRAEELQLRLKLAEVEVPIIVERDIYKATAKTMDYKGFTVAIPNYTSLAPMLEQLNRSFEGGQS.

Zn(2+) is bound by residues C202, C205, C224, and C226. The active site involves D349.

Belongs to the MurCDEF family. MurT subfamily. As to quaternary structure, forms a heterodimer with GatD.

The catalysed reaction is beta-D-GlcNAc-(1-&gt;4)-Mur2Ac(oyl-L-Ala-gamma-D-Glu-L-Lys-D-Ala-D-Ala)-di-trans,octa-cis-undecaprenyl diphosphate + L-glutamine + ATP + H2O = beta-D-GlcNAc-(1-&gt;4)-Mur2Ac(oyl-L-Ala-D-isoglutaminyl-L-Lys-D-Ala-D-Ala)-di-trans,octa-cis-undecaprenyl diphosphate + L-glutamate + ADP + phosphate + H(+). It catalyses the reaction beta-D-GlcNAc-(1-&gt;4)-Mur2Ac(oyl-L-Ala-gamma-D-Glu-L-Lys-D-Ala-D-Ala)-di-trans,octa-cis-undecaprenyl diphosphate + ATP = beta-D-GlcNAc-(1-&gt;4)-Mur2Ac(oyl-L-Ala-gamma-D-O-P-Glu-L-Lys-D-Ala-D-Ala)-di-trans,octa-cis-undecaprenyl diphosphate + ADP. The enzyme catalyses beta-D-GlcNAc-(1-&gt;4)-Mur2Ac(oyl-L-Ala-gamma-D-O-P-Glu-L-Lys-D-Ala-D-Ala)-di-trans,octa-cis-undecaprenyl diphosphate + NH4(+) = beta-D-GlcNAc-(1-&gt;4)-Mur2Ac(oyl-L-Ala-D-isoglutaminyl-L-Lys-D-Ala-D-Ala)-di-trans,octa-cis-undecaprenyl diphosphate + phosphate + H(+). It participates in cell wall biogenesis; peptidoglycan biosynthesis. In terms of biological role, the lipid II isoglutaminyl synthase complex catalyzes the formation of alpha-D-isoglutamine in the cell wall lipid II stem peptide. The MurT subunit catalyzes the ATP-dependent amidation of D-glutamate residue of lipid II, converting it to an isoglutamine residue. The sequence is that of Lipid II isoglutaminyl synthase (glutamine-hydrolyzing) subunit MurT from Staphylococcus aureus (strain N315).